The following is a 732-amino-acid chain: Polyribonucleotide nucleotidyltransferase (732 aa).

Mg(2+)-binding residues include Asp503 and Asp509. Residues 570–629 enclose the KH domain; the sequence is PRLTAIQVPVESIGLIIGKGGETIRSITEETGAEINIEDDGTVTIACSSNEGTKGAVEII. The 75-residue stretch at 639-713 folds into the S1 motif domain; that stretch reads GTVYIGKVRD…GKTRFALSIK (75 aa).

The protein belongs to the polyribonucleotide nucleotidyltransferase family. Mg(2+) serves as cofactor.

It localises to the cytoplasm. The catalysed reaction is RNA(n+1) + phosphate = RNA(n) + a ribonucleoside 5'-diphosphate. In terms of biological role, involved in mRNA degradation. Catalyzes the phosphorolysis of single-stranded polyribonucleotides processively in the 3'- to 5'-direction. The chain is Polyribonucleotide nucleotidyltransferase from Chlorobium phaeovibrioides (strain DSM 265 / 1930) (Prosthecochloris vibrioformis (strain DSM 265)).